Consider the following 397-residue polypeptide: LIM/homeobox protein Lhx9 (397 aa).

The tract at residues 40–60 (RSKTESRLAKGGQMNGRETNM) is disordered. 2 consecutive LIM zinc-binding domains span residues 69–130 (ALCA…RFSV) and 131–193 (QRCA…LLQG). Positions 267–326 (TKRMATSFKHHQLRTMKSYFAINHNPDAKDLKQLAQKTGLTKRVLQVWFQNARAKFRRNL) form a DNA-binding region, homeobox. Disordered stretches follow at residues 330 to 363 (ENGGVDKADGTSLPAPPSADSGALTPPGTATTLT) and 378 to 397 (SNLDSHEPGSPSQTTLTNLF). The span at 353 to 363 (LTPPGTATTLT) shows a compositional bias: low complexity. Polar residues predominate over residues 387 to 397 (SPSQTTLTNLF).

Its subcellular location is the nucleus. Its function is as follows. May be involved in gonadal development. The sequence is that of LIM/homeobox protein Lhx9 (LHX9) from Gallus gallus (Chicken).